A 367-amino-acid chain; its full sequence is Glutamate 5-kinase (367 aa).

Lys9 lines the ATP pocket. Ser49, Asp136, and Asn148 together coordinate substrate. ATP-binding positions include 168–169 and 210–216; these read TD and TGGMKSK. The PUA domain occupies 276 to 350; the sequence is SGQIEVDAGA…GMQSQDIQVR (75 aa).

It belongs to the glutamate 5-kinase family.

The protein localises to the cytoplasm. It carries out the reaction L-glutamate + ATP = L-glutamyl 5-phosphate + ADP. Its pathway is amino-acid biosynthesis; L-proline biosynthesis; L-glutamate 5-semialdehyde from L-glutamate: step 1/2. Catalyzes the transfer of a phosphate group to glutamate to form L-glutamate 5-phosphate. The polypeptide is Glutamate 5-kinase (Bacillus cereus (strain B4264)).